Here is a 616-residue protein sequence, read N- to C-terminus: MTEDRAHKVADEPAASGRQSPERKKRKWDQPAEDLVSAAVTAAAVSGMPVMNFGALPGVVLPGVTAYGAATLPSVVPVPYSLPPHIAPSVLQNAAAAAQKLSQAKIPDEVIAREIVINDADPSVRYKLTKRQTQEEIQKCTNTVIITRGKYHPPNLLPDGEKPLYLHISAGSQLKDTAERIKAVDRAASMIEEILKQGTTSESISVPFSSSTGQAVRPFSASVFLGFDADPSLNITARIRGPNDQYINHIMKETGVTVVLRGKDSENLGSCHSEASQQPLHLYLTSMHLKNLEAAKVLAENLLDTVAAEFGASRISSSKVYGAVPPPQQLLAGVDTSGTKSDVHYIVGPNVLSGATHSFASTGVIAPVVAPAVTVQSGAPTYSGVPLPSNMAYPIPPANGGAFYSGYGDIYPQATPLQQLAFTLKHASSSATQAVPVTSTPTSMATKGNSILDAEMDKRSRRKFQELPVSKGPATESQNSQQGSKFVKTGLDSSGNIGSSSIAPPKKVHPGSNGMLPQEEADMPSHLSISTKMLPPPLKSMLPLPPRSMPPPPPKSMPPPPPKFPSDEFLSRNENKFFPLKEPTAPPRSFDAISVLPSERRPREPKEEKNKRHTCV.

A compositionally biased stretch (basic and acidic residues) spans 1 to 11 (MTEDRAHKVAD). The interval 1–32 (MTEDRAHKVADEPAASGRQSPERKKRKWDQPA) is disordered. The KH domain occupies 198–304 (GTTSESISVP…AKVLAENLLD (107 aa)). Composition is skewed to polar residues over residues 432 to 449 (TQAVPVTSTPTSMATKGN), 475 to 484 (TESQNSQQGS), and 491 to 502 (LDSSGNIGSSSI). Disordered regions lie at residues 432-455 (TQAVPVTSTPTSMATKGNSILDAE) and 467-616 (LPVS…HTCV). Positions 534–564 (LPPPLKSMLPLPPRSMPPPPPKSMPPPPPKF) are enriched in pro residues. Basic and acidic residues-rich tracts occupy residues 565-575 (PSDEFLSRNEN) and 598-610 (SERRPREPKEEKN).

Interacts with RS2. Expressed in vegetative tissues. More abundant in apices and young leaf primordia than in fully expanded leaf tissues.

The protein resides in the nucleus. This is Protein RIK from Zea mays (Maize).